The following is a 448-amino-acid chain: Tubby-like F-box protein 3 (448 aa).

Residues 56-102 (ESRWASLPPELLREVIRRLEADESTWPSRRNVVCFAAVCRTWREMCK) form the F-box domain. A compositionally biased stretch (pro residues) spans 387 to 403 (PSPPPAGAPTPSQPGPA). Positions 387 to 406 (PSPPPAGAPTPSQPGPADPE) are disordered.

This sequence belongs to the TUB family. Expressed in roots, leaves, flowers and seeds.

In Oryza sativa subsp. japonica (Rice), this protein is Tubby-like F-box protein 3 (TULP3).